Here is an 89-residue protein sequence, read N- to C-terminus: Small ribosomal subunit protein uS17 (89 aa).

It belongs to the universal ribosomal protein uS17 family. Part of the 30S ribosomal subunit.

In terms of biological role, one of the primary rRNA binding proteins, it binds specifically to the 5'-end of 16S ribosomal RNA. In Delftia acidovorans (strain DSM 14801 / SPH-1), this protein is Small ribosomal subunit protein uS17.